A 286-amino-acid chain; its full sequence is Probable alpha-ketoglutarate-dependent hypophosphite dioxygenase (286 aa).

Belongs to the PhyH family.

In terms of biological role, required for hypophosphite oxidation. The chain is Probable alpha-ketoglutarate-dependent hypophosphite dioxygenase (htxA) from Stutzerimonas stutzeri (Pseudomonas stutzeri).